The chain runs to 850 residues: Pentatricopeptide repeat-containing protein At3g49170, chloroplastic (850 aa).

Residues 1-50 constitute a chloroplast transit peptide; the sequence is MAMISFSFPSPAKLPIKSQPSVSNRINVADRLILRHLNAGDLRGAVSALD. 17 PPR repeats span residues 61 to 95, 96 to 130, 131 to 164, 165 to 199, 201 to 232, 233 to 267, 268 to 302, 303 to 334, 335 to 370, 372 to 406, 407 to 437, 438 to 472, 473 to 507, 508 to 538, 539 to 573, 574 to 609, and 610 to 640; these read DSVT…DIEP, DSVL…GKRD, VVSW…GLVP, NDYC…GHFE, DVCV…MSEL, NVVT…GFES, DKFT…GLVD, DVEC…MEDH, SVMS…GHVE, NHFT…GLAS, NSSV…LSEK, NLVS…ELGV, SAFT…GLSC, NQPV…MENR, NVIS…GVKP, NEVT…KIKP, and KMEH…MPFQ. Residues 645–720 are type E motif; the sequence is VWRTFLGACR…EGGCSWIEVG (76 aa). Positions 721–751 are type E(+) motif; it reads DKIHKFYVGDTAHPNAHQIYDELDRLITEIK. Positions 752-850 are type DYW motif; that stretch reads RCGYVPDTDL…DGKCSCNDYW (99 aa).

The protein belongs to the PPR family. PCMP-H subfamily.

The protein localises to the plastid. Its subcellular location is the chloroplast. Its function is as follows. May play a role in embryogenesis. The protein is Pentatricopeptide repeat-containing protein At3g49170, chloroplastic (EMB2261) of Arabidopsis thaliana (Mouse-ear cress).